Reading from the N-terminus, the 348-residue chain is MAATLGPLGSWQQWRRCLLARDGSRMLLLLLLLGSGQGPQQVGAGQTFEYLKREHSLSKPYQGVGTGSSSLWNLMGNAMVMTQYIRLTPDMQSKQGALWNRVPCFLRDWELQVHFKIHGQGKKNLHGDGLAIWYTKDRMQPGPVFGNMDKFVGLGVFVDTYPNEEKQQERVFPYISAMVNNGSLSYDHERDGRPTELGGCTAIVRNLHYDTFLVIRYVKRHLTIMMDIDGKHEWRDCIEVPGVRLPRGYYFGTSSITGDLSDNHDVISLKLFELTVERTPEEEKLHRDVFLPSVDNMKLPEVTAPLPPLSGLALFHIVFFSLVIFVFAIVIGIILYNKWQEQSRKRFY.

An N-terminal signal peptide occupies residues 1–38; that stretch reads MAATLGPLGSWQQWRRCLLARDGSRMLLLLLLLGSGQG. Over 39–313 the chain is Lumenal; it reads PQQVGAGQTF…APLPPLSGLA (275 aa). The L-type lectin-like domain occupies 49-274; it reads EYLKREHSLS…DVISLKLFEL (226 aa). The a carbohydrate site is built by S93 and D128. Ca(2+) contacts are provided by D159, Y161, and N163. 161 to 163 contacts a carbohydrate; that stretch reads YPN. Residue N181 is glycosylated (N-linked (GlcNAc...) asparagine). H188 lines the a carbohydrate pocket. D191 contributes to the Ca(2+) binding site. The cysteines at positions 200 and 237 are disulfide-linked. Position 258-260 (258-260) interacts with a carbohydrate; sequence GDL. A helical transmembrane segment spans residues 314–334; sequence LFHIVFFSLVIFVFAIVIGII. At 335-348 the chain is on the cytoplasmic side; the sequence is LYNKWQEQSRKRFY. The short motif at 344-346 is the Endoplasmic reticulum retention signal element; sequence RKR.

It is found in the endoplasmic reticulum membrane. Its subcellular location is the golgi apparatus membrane. In terms of biological role, may be involved in the regulation of export from the endoplasmic reticulum of a subset of glycoproteins. May function as a regulator of ERGIC-53. In Pongo abelii (Sumatran orangutan), this protein is VIP36-like protein (LMAN2L).